We begin with the raw amino-acid sequence, 400 residues long: CCA-adding enzyme (400 aa).

ATP is bound by residues Gly-28 and Arg-31. CTP is bound by residues Gly-28 and Arg-31. Mg(2+)-binding residues include Asp-41 and Asp-43. ATP is bound by residues Arg-112, Asp-155, Arg-158, Arg-161, and Arg-164. Residues Arg-112, Asp-155, Arg-158, Arg-161, and Arg-164 each coordinate CTP.

It belongs to the tRNA nucleotidyltransferase/poly(A) polymerase family. Bacterial CCA-adding enzyme type 3 subfamily. As to quaternary structure, homodimer. Requires Mg(2+) as cofactor.

It carries out the reaction a tRNA precursor + 2 CTP + ATP = a tRNA with a 3' CCA end + 3 diphosphate. The enzyme catalyses a tRNA with a 3' CCA end + 2 CTP + ATP = a tRNA with a 3' CCACCA end + 3 diphosphate. In terms of biological role, catalyzes the addition and repair of the essential 3'-terminal CCA sequence in tRNAs without using a nucleic acid template. Adds these three nucleotides in the order of C, C, and A to the tRNA nucleotide-73, using CTP and ATP as substrates and producing inorganic pyrophosphate. tRNA 3'-terminal CCA addition is required both for tRNA processing and repair. Also involved in tRNA surveillance by mediating tandem CCA addition to generate a CCACCA at the 3' terminus of unstable tRNAs. While stable tRNAs receive only 3'-terminal CCA, unstable tRNAs are marked with CCACCA and rapidly degraded. This Staphylococcus aureus (strain bovine RF122 / ET3-1) protein is CCA-adding enzyme.